The sequence spans 78 residues: Short neurotoxin 342 (78 aa).

Residues 1–21 (MKTLLLTLVVLTIVCLDLGYT) form the signal peptide. 4 disulfides stabilise this stretch: Cys-24-Cys-43, Cys-38-Cys-57, Cys-59-Cys-70, and Cys-71-Cys-76.

Belongs to the three-finger toxin family. Short-chain subfamily. Type I alpha-neurotoxin sub-subfamily. As to expression, expressed by the venom gland.

Its subcellular location is the secreted. Its function is as follows. Binds to muscle nicotinic acetylcholine receptor (nAChR) and inhibit acetylcholine from binding to the receptor, thereby impairing neuromuscular transmission. The protein is Short neurotoxin 342 of Drysdalia coronoides (White-lipped snake).